The sequence spans 255 residues: Hydroxyacylglutathione hydrolase (255 aa).

Zn(2+) is bound by residues His56, His58, Asp60, His61, His114, Asp133, and His171.

It belongs to the metallo-beta-lactamase superfamily. Glyoxalase II family. As to quaternary structure, monomer. Zn(2+) serves as cofactor.

The enzyme catalyses an S-(2-hydroxyacyl)glutathione + H2O = a 2-hydroxy carboxylate + glutathione + H(+). Its pathway is secondary metabolite metabolism; methylglyoxal degradation; (R)-lactate from methylglyoxal: step 2/2. Functionally, thiolesterase that catalyzes the hydrolysis of S-D-lactoyl-glutathione to form glutathione and D-lactic acid. The protein is Hydroxyacylglutathione hydrolase of Cereibacter sphaeroides (strain ATCC 17029 / ATH 2.4.9) (Rhodobacter sphaeroides).